The following is a 648-amino-acid chain: Shugoshin (648 aa).

Coiled coils occupy residues 95 to 122 (LMIKITDLETKISELVQENVQLRSRLSV) and 208 to 273 (DDRA…KDEA). Disordered stretches follow at residues 188–239 (KVVG…RSSR), 262–334 (EADK…QEDA), 367–443 (VYRD…RPRR), 483–518 (TNRKLRKQREGVADSADVHGETDHEQDPEQSPAAED), and 628–648 (HRARAKAERQVGKKPAFKVST). Composition is skewed to basic and acidic residues over residues 200 to 217 (VRGERETLDDRAQQHQEA) and 262 to 273 (EADKSRSAKDEA). A compositionally biased stretch (polar residues) spans 306-315 (ASGTLTQSNE). Composition is skewed to basic and acidic residues over residues 424–440 (IVVDEVMPHNDYSDATR) and 490–509 (QREGVADSADVHGETDHEQD).

It belongs to the shugoshin family.

Its subcellular location is the nucleus. It is found in the chromosome. It localises to the centromere. Functionally, plays a central role in chromosome cohesion during cell division by preventing premature dissociation of cohesin complex from centromeres after prophase, when most of cohesin complex dissociates from chromosomes arms. May act by protecting RAD21 and or REC8 from cleavage by ESP1/separase. This chain is Shugoshin (SGO1), found in Eremothecium gossypii (strain ATCC 10895 / CBS 109.51 / FGSC 9923 / NRRL Y-1056) (Yeast).